The primary structure comprises 93 residues: Serine rich endogenous peptide 6 (93 aa).

The N-terminal stretch at Met-1 to Ser-27 is a signal peptide. Short sequence motifs (SCOOP motif) lie at residues Gly-48–Ile-62 and Ile-73–Arg-87. Positions Gly-52 to Gly-93 are disordered. Residues Ser-53–Tyr-66 are compositionally biased toward polar residues. Short sequence motifs (sxS motif essential for MIK2 binding) lie at residues Ser-54–Ser-56 and Ser-79–Ser-81.

It belongs to the serine rich endogenous peptide (SCOOP) phytocytokine family. In terms of assembly, interacts with MIK2 (via extracellular leucine-rich repeat domain); this interaction triggers the formation of complex between MIK2 and the BAK1/SERK3 and SERK4 coreceptors, and subsequent BAK1 activation by phosphorylation. In terms of tissue distribution, mostly expressed in seedlings shoots, and, to a lower extent, in roots.

It localises to the cell membrane. It is found in the secreted. The protein localises to the extracellular space. Its subcellular location is the apoplast. Functionally, brassicaceae-specific phytocytokine (plant endogenous peptide released into the apoplast) perceived by MIK2 in a BAK1/SERK3 and SERK4 coreceptors-dependent manner, that modulates various physiological and antimicrobial processes including growth prevention and reactive oxygen species (ROS) response regulation. Inhibits root growth. The polypeptide is Serine rich endogenous peptide 6 (Arabidopsis thaliana (Mouse-ear cress)).